We begin with the raw amino-acid sequence, 185 residues long: Adenine phosphoribosyltransferase (185 aa).

It belongs to the purine/pyrimidine phosphoribosyltransferase family. Homodimer.

The protein resides in the cytoplasm. It carries out the reaction AMP + diphosphate = 5-phospho-alpha-D-ribose 1-diphosphate + adenine. Its pathway is purine metabolism; AMP biosynthesis via salvage pathway; AMP from adenine: step 1/1. Functionally, catalyzes a salvage reaction resulting in the formation of AMP, that is energically less costly than de novo synthesis. This is Adenine phosphoribosyltransferase from Pectobacterium carotovorum subsp. carotovorum (strain PC1).